The primary structure comprises 240 residues: UDP-2,3-diacylglucosamine hydrolase (240 aa).

The Mn(2+) site is built by D8, H10, D41, N79, and H114. A substrate-binding site is contributed by 79–80; it reads NR. Substrate is bound by residues D122, S160, N164, K167, and H195. The Mn(2+) site is built by H195 and H197.

Belongs to the LpxH family. The cofactor is Mn(2+).

The protein resides in the cell inner membrane. It catalyses the reaction UDP-2-N,3-O-bis[(3R)-3-hydroxytetradecanoyl]-alpha-D-glucosamine + H2O = 2-N,3-O-bis[(3R)-3-hydroxytetradecanoyl]-alpha-D-glucosaminyl 1-phosphate + UMP + 2 H(+). It participates in glycolipid biosynthesis; lipid IV(A) biosynthesis; lipid IV(A) from (3R)-3-hydroxytetradecanoyl-[acyl-carrier-protein] and UDP-N-acetyl-alpha-D-glucosamine: step 4/6. In terms of biological role, hydrolyzes the pyrophosphate bond of UDP-2,3-diacylglucosamine to yield 2,3-diacylglucosamine 1-phosphate (lipid X) and UMP by catalyzing the attack of water at the alpha-P atom. Involved in the biosynthesis of lipid A, a phosphorylated glycolipid that anchors the lipopolysaccharide to the outer membrane of the cell. The sequence is that of UDP-2,3-diacylglucosamine hydrolase from Shigella sonnei (strain Ss046).